A 101-amino-acid polypeptide reads, in one-letter code: Putative pterin-4-alpha-carbinolamine dehydratase (101 aa).

This sequence belongs to the pterin-4-alpha-carbinolamine dehydratase family.

The catalysed reaction is (4aS,6R)-4a-hydroxy-L-erythro-5,6,7,8-tetrahydrobiopterin = (6R)-L-erythro-6,7-dihydrobiopterin + H2O. This Streptomyces avermitilis (strain ATCC 31267 / DSM 46492 / JCM 5070 / NBRC 14893 / NCIMB 12804 / NRRL 8165 / MA-4680) protein is Putative pterin-4-alpha-carbinolamine dehydratase (dcoH).